The following is an 80-amino-acid chain: RNA-binding protein Hfq (80 aa).

In terms of domain architecture, Sm spans 10–69; sequence DPFLNTLRREHVPVSIYLVNGIKLQGQIESFDQYVVLLKNTVTQMVYKHAISTVVPARPV.

It belongs to the Hfq family. As to quaternary structure, homohexamer.

Functionally, RNA chaperone that binds small regulatory RNA (sRNAs) and mRNAs to facilitate mRNA translational regulation in response to envelope stress, environmental stress and changes in metabolite concentrations. Also binds with high specificity to tRNAs. The sequence is that of RNA-binding protein Hfq from Azoarcus sp. (strain BH72).